A 325-amino-acid polypeptide reads, in one-letter code: Aspartate carbamoyltransferase catalytic subunit (325 aa).

Positions 55 and 56 each coordinate carbamoyl phosphate. Position 83 (Lys-83) interacts with L-aspartate. Carbamoyl phosphate-binding residues include Arg-105, His-135, and Gln-138. Residues Arg-176 and Arg-230 each contribute to the L-aspartate site. The carbamoyl phosphate site is built by Gly-271 and Pro-272.

Belongs to the aspartate/ornithine carbamoyltransferase superfamily. ATCase family. In terms of assembly, heterododecamer (2C3:3R2) of six catalytic PyrB chains organized as two trimers (C3), and six regulatory PyrI chains organized as three dimers (R2).

The enzyme catalyses carbamoyl phosphate + L-aspartate = N-carbamoyl-L-aspartate + phosphate + H(+). Its pathway is pyrimidine metabolism; UMP biosynthesis via de novo pathway; (S)-dihydroorotate from bicarbonate: step 2/3. Its function is as follows. Catalyzes the condensation of carbamoyl phosphate and aspartate to form carbamoyl aspartate and inorganic phosphate, the committed step in the de novo pyrimidine nucleotide biosynthesis pathway. In Streptomyces avermitilis (strain ATCC 31267 / DSM 46492 / JCM 5070 / NBRC 14893 / NCIMB 12804 / NRRL 8165 / MA-4680), this protein is Aspartate carbamoyltransferase catalytic subunit.